The chain runs to 297 residues: Phosphoribosylaminoimidazole-succinocarboxamide synthase (297 aa).

Belongs to the SAICAR synthetase family.

The enzyme catalyses 5-amino-1-(5-phospho-D-ribosyl)imidazole-4-carboxylate + L-aspartate + ATP = (2S)-2-[5-amino-1-(5-phospho-beta-D-ribosyl)imidazole-4-carboxamido]succinate + ADP + phosphate + 2 H(+). It participates in purine metabolism; IMP biosynthesis via de novo pathway; 5-amino-1-(5-phospho-D-ribosyl)imidazole-4-carboxamide from 5-amino-1-(5-phospho-D-ribosyl)imidazole-4-carboxylate: step 1/2. The protein is Phosphoribosylaminoimidazole-succinocarboxamide synthase of Corynebacterium diphtheriae (strain ATCC 700971 / NCTC 13129 / Biotype gravis).